The chain runs to 592 residues: Thiol:disulfide interchange protein DsbD (592 aa).

Positions 1–19 (MKLIASFSIFMLMSIWSFA) are cleaved as a signal peptide. Intrachain disulfides connect Cys-130/Cys-136 and Cys-204/Cys-326. The next 8 helical transmembrane spans lie at 186 to 206 (IWVL…PCVF), 229 to 249 (FVLS…LGLV), 265 to 285 (IILG…FGAW), 318 to 338 (ISGL…LLYI), 345 to 365 (LLGF…LILF), 379 to 399 (WMNI…LMFV), 406 to 426 (MATD…FYVM), and 440 to 460 (ALVI…TIFG). The Thioredoxin domain occupies 443 to 592 (IFIGLFASAM…AFAAHAKNIL (150 aa)). Cys-508 and Cys-511 form a disulfide bridge.

This sequence belongs to the thioredoxin family. DsbD subfamily.

It is found in the cell inner membrane. It carries out the reaction [protein]-dithiol + NAD(+) = [protein]-disulfide + NADH + H(+). The enzyme catalyses [protein]-dithiol + NADP(+) = [protein]-disulfide + NADPH + H(+). Functionally, required to facilitate the formation of correct disulfide bonds in some periplasmic proteins and for the assembly of the periplasmic c-type cytochromes. Acts by transferring electrons from cytoplasmic thioredoxin to the periplasm. This transfer involves a cascade of disulfide bond formation and reduction steps. This is Thiol:disulfide interchange protein DsbD from Pseudoalteromonas atlantica (strain T6c / ATCC BAA-1087).